A 655-amino-acid polypeptide reads, in one-letter code: Broad substrate specificity ATP-binding cassette transporter ABCG2 (655 aa).

Residues Met1 to Ser395 lie on the Cytoplasmic side of the membrane. One can recognise an ABC transporter domain in the interval Leu37 to Ala286. Residues Gly80–Ser87, Arg184–Glu190, Glu211, and His243 each bind ATP. Residue Thr362 is modified to Phosphothreonine; by PIM1. Positions Leu389–Leu651 constitute an ABC transmembrane type-2 domain. Residues Ile396–Leu416 form a helical membrane-spanning segment. Residues Lys417 to Gly428 are Extracellular-facing. Residues Val429–Val449 traverse the membrane as a helical segment. Residues Val450–Asp477 lie on the Cytoplasmic side of the membrane. The chain crosses the membrane as a helical span at residues Leu478 to Gly498. The Extracellular portion of the chain corresponds to Leu499–Phe506. A helical membrane pass occupies residues Phe507–Ile527. At Ala528–Ser535 the chain is on the cytoplasmic side. The helical transmembrane segment at Val536–Val556 threads the bilayer. At Asn557–His630 the chain is on the extracellular side. Cys592 and Cys608 are joined by a disulfide. The N-linked (GlcNAc...) asparagine glycan is linked to Asn596. Residues Val631 to Leu651 traverse the membrane as a helical segment. The Cytoplasmic segment spans residues Lys652 to Ser655.

This sequence belongs to the ABC transporter superfamily. ABCG family. Eye pigment precursor importer (TC 3.A.1.204) subfamily. In terms of assembly, homodimer; disulfide-linked. The minimal functional unit is a homodimer, but the major oligomeric form in plasma membrane is a homotetramer with possibility of higher order oligomerization up to homododecamers. N-glycosylated. Glycosylation-deficient ABCG2 is normally expressed and functional. Post-translationally, phosphorylated. Phosphorylation at Thr-362 by PIM1 is induced by drugs like mitoxantrone and is associated with cells increased drug resistance. It regulates the localization to the plasma membrane, the homooligomerization and therefore, the activity of the transporter. In terms of tissue distribution, highly expressed in placenta. Low expression in small intestine, liver and colon. Expressed in brain (at protein level).

The protein localises to the cell membrane. It localises to the apical cell membrane. The protein resides in the mitochondrion membrane. It catalyses the reaction ATP + H2O + xenobioticSide 1 = ADP + phosphate + xenobioticSide 2.. It carries out the reaction urate(in) + ATP + H2O = urate(out) + ADP + phosphate + H(+). The catalysed reaction is indoxyl sulfate(in) + ATP + H2O = indoxyl sulfate(out) + ADP + phosphate + H(+). The enzyme catalyses sphing-4-enine 1-phosphate(in) + ATP + H2O = sphing-4-enine 1-phosphate(out) + ADP + phosphate + H(+). It catalyses the reaction estrone 3-sulfate(in) + ATP + H2O = estrone 3-sulfate(out) + ADP + phosphate + H(+). It carries out the reaction dehydroepiandrosterone 3-sulfate(in) + ATP + H2O = dehydroepiandrosterone 3-sulfate(out) + ADP + phosphate + H(+). The catalysed reaction is 4-methylumbelliferone sulfate(in) + ATP + H2O = 4-methylumbelliferone sulfate(out) + ADP + phosphate + H(+). The enzyme catalyses 5,7-dimethyl-2-methylamino-4-(3-pyridylmethyl)-1,3-benzothiazol-6-yl beta-D-glucuronate(in) + ATP + H2O = 5,7-dimethyl-2-methylamino-4-(3-pyridylmethyl)-1,3-benzothiazol-6-yl beta-D-glucuronate(out) + ADP + phosphate + H(+). It catalyses the reaction 4-methylumbelliferone beta-D-glucuronate(in) + ATP + H2O = 4-methylumbelliferone beta-D-glucuronate(out) + ADP + phosphate + H(+). It carries out the reaction 5,7-dimethyl-2-methylamino-4-(3-pyridylmethyl)-1,3-benzothiazol-6-yl sulfate(in) + ATP + H2O = 5,7-dimethyl-2-methylamino-4-(3-pyridylmethyl)-1,3-benzothiazol-6-yl sulfate(out) + ADP + phosphate + H(+). The catalysed reaction is 17beta-estradiol 17-O-(beta-D-glucuronate)(in) + ATP + H2O = 17beta-estradiol 17-O-(beta-D-glucuronate)(out) + ADP + phosphate + H(+). The enzyme catalyses methotrexate(in) + ATP + H2O = methotrexate(out) + ADP + phosphate + H(+). It catalyses the reaction riboflavin(in) + ATP + H2O = riboflavin(out) + ADP + phosphate + H(+). It carries out the reaction pheophorbide a(in) + ATP + H2O = pheophorbide a(out) + ADP + phosphate + H(+). The catalysed reaction is itaconate(in) + ATP + H2O = itaconate(out) + ADP + phosphate + H(+). With respect to regulation, specifically inhibited by the fungal toxin fumitremorgin C and Ko143. Broad substrate specificity ATP-dependent transporter of the ATP-binding cassette (ABC) family that actively extrudes a wide variety of physiological compounds, dietary toxins and xenobiotics from cells. Involved in porphyrin homeostasis, mediating the export of protoporphyrin IX (PPIX) from both mitochondria to cytosol and cytosol to extracellular space, it also functions in the cellular export of heme. Also mediates the efflux of sphingosine-1-P from cells. Acts as a urate exporter functioning in both renal and extrarenal urate excretion. In kidney, it also functions as a physiological exporter of the uremic toxin indoxyl sulfate. Also involved in the excretion of steroids like estrone 3-sulfate/E1S, 3beta-sulfooxy-androst-5-en-17-one/DHEAS, and other sulfate conjugates. Mediates the secretion of the riboflavin and biotin vitamins into milk. Extrudes pheophorbide a, a phototoxic porphyrin catabolite of chlorophyll, reducing its bioavailability. Plays an important role in the exclusion of xenobiotics from the brain. It confers to cells a resistance to multiple drugs and other xenobiotics including mitoxantrone, pheophorbide, camptothecin, methotrexate, azidothymidine, and the anthracyclines daunorubicin and doxorubicin, through the control of their efflux. In placenta, it limits the penetration of drugs from the maternal plasma into the fetus. May play a role in early stem cell self-renewal by blocking differentiation. In inflammatory macrophages, exports itaconate from the cytosol to the extracellular compartment and limits the activation of TFEB-dependent lysosome biogenesis involved in antibacterial innate immune response. This is Broad substrate specificity ATP-binding cassette transporter ABCG2 (ABCG2) from Homo sapiens (Human).